Here is a 224-residue protein sequence, read N- to C-terminus: Ribonuclease HII (224 aa).

The RNase H type-2 domain maps to 36–224; that stretch reads RGVAGVDEVG…RRSFLRRFLG (189 aa). A divalent metal cation contacts are provided by Asp42, Glu43, and Asp138.

The protein belongs to the RNase HII family. The cofactor is Mn(2+). It depends on Mg(2+) as a cofactor.

It is found in the cytoplasm. The enzyme catalyses Endonucleolytic cleavage to 5'-phosphomonoester.. Its function is as follows. Endonuclease that specifically degrades the RNA of RNA-DNA hybrids. The protein is Ribonuclease HII of Parasynechococcus marenigrum (strain WH8102).